Reading from the N-terminus, the 76-residue chain is Sec-independent protein translocase protein TatA (76 aa).

The helical transmembrane segment at methionine 1–glycine 21 threads the bilayer. Composition is skewed to basic and acidic residues over residues phenylalanine 39–proline 50 and glycine 64–serine 76. A disordered region spans residues phenylalanine 39–serine 76.

It belongs to the TatA/E family. In terms of assembly, the Tat system comprises two distinct complexes: a TatABC complex, containing multiple copies of TatA, TatB and TatC subunits, and a separate TatA complex, containing only TatA subunits. Substrates initially bind to the TatABC complex, which probably triggers association of the separate TatA complex to form the active translocon.

Its subcellular location is the cell inner membrane. Part of the twin-arginine translocation (Tat) system that transports large folded proteins containing a characteristic twin-arginine motif in their signal peptide across membranes. TatA could form the protein-conducting channel of the Tat system. The polypeptide is Sec-independent protein translocase protein TatA (Herminiimonas arsenicoxydans).